Consider the following 168-residue polypeptide: Small ribosomal subunit protein uS4 (168 aa).

Residues 103–167 form the S4 RNA-binding domain; sequence RRLQTIVYKK…SPFKKSIEEK (65 aa).

This sequence belongs to the universal ribosomal protein uS4 family. Part of the 30S ribosomal subunit. Contacts protein S5. The interaction surface between S4 and S5 is involved in control of translational fidelity.

One of the primary rRNA binding proteins, it binds directly to 16S rRNA where it nucleates assembly of the body of the 30S subunit. Functionally, with S5 and S12 plays an important role in translational accuracy. This is Small ribosomal subunit protein uS4 from Staphylothermus marinus (strain ATCC 43588 / DSM 3639 / JCM 9404 / F1).